We begin with the raw amino-acid sequence, 813 residues long: Disintegrin and metalloproteinase domain-containing protein 33 (813 aa).

An N-terminal signal peptide occupies residues 1–29 (MGWRPRRARGTPLLLLLLLLLLWPVPGAG). Positions 30–203 (VLQGHIPGQP…PGGPQSRGRR (174 aa)) are excised as a propeptide. The Extracellular segment spans residues 30 to 701 (VLQGHIPGQP…GPVQAENHDT (672 aa)). A glycan (N-linked (GlcNAc...) asparagine) is linked at asparagine 109. The Cysteine switch motif lies at 131–138 (CTCSGMSG). Residue cysteine 133 participates in Zn(2+) binding. An N-linked (GlcNAc...) asparagine glycan is attached at asparagine 145. Residues 184–205 (PGNKAGMTSLPGGPQSRGRREA) form a disordered region. One can recognise a Peptidase M12B domain in the interval 210–409 (KYLELYIVAD…GGGACLSNAP (200 aa)). 2 N-linked (GlcNAc...) asparagine glycosylation sites follow: asparagine 231 and asparagine 276. Intrachain disulfides connect cysteine 320/cysteine 404, cysteine 360/cysteine 388, and cysteine 361/cysteine 371. Histidine 345 serves as a coordination point for Zn(2+). The active site involves glutamate 346. Histidine 349 and histidine 355 together coordinate Zn(2+). In terms of domain architecture, Disintegrin spans 417–503 (PALCGNGFVE…HCPPDVYLLD (87 aa)). Asparagine 448 is a glycosylation site (N-linked (GlcNAc...) asparagine). 4 cysteine pairs are disulfide-bonded: cysteine 475–cysteine 495, cysteine 653–cysteine 663, cysteine 657–cysteine 669, and cysteine 671–cysteine 680. Residues 649–681 (ELQRCLTACHSHGVCNSNHNCHCAPGWAPPFCD) form the EGF-like domain. The helical transmembrane segment at 702–722 (FLLAMLLSVLLPLLPGAGLAW) threads the bilayer. Over 723–813 (CCYRLPGAHL…QVQMPRSCLW (91 aa)) the chain is Cytoplasmic. The disordered stretch occupies residues 746-813 (SGPKDGPHRD…QVQMPRSCLW (68 aa)). The span at 780-791 (ENSHEPSSHPEK) shows a compositional bias: basic and acidic residues.

Zn(2+) serves as cofactor. The precursor is cleaved by a furin endopeptidase. As to expression, expressed in all tissues, except liver, with high expression in placenta, lung, spleen and veins.

The protein localises to the membrane. This is Disintegrin and metalloproteinase domain-containing protein 33 (ADAM33) from Homo sapiens (Human).